The primary structure comprises 347 residues: Methylthioribose-1-phosphate isomerase (347 aa).

Residues 45–47 (RGA), Arg-88, and Gln-197 contribute to the substrate site. The active-site Proton donor is the Asp-238. Substrate is bound at residue 248–249 (NK).

The protein belongs to the eIF-2B alpha/beta/delta subunits family. MtnA subfamily.

It catalyses the reaction 5-(methylsulfanyl)-alpha-D-ribose 1-phosphate = 5-(methylsulfanyl)-D-ribulose 1-phosphate. It functions in the pathway amino-acid biosynthesis; L-methionine biosynthesis via salvage pathway; L-methionine from S-methyl-5-thio-alpha-D-ribose 1-phosphate: step 1/6. Functionally, catalyzes the interconversion of methylthioribose-1-phosphate (MTR-1-P) into methylthioribulose-1-phosphate (MTRu-1-P). The chain is Methylthioribose-1-phosphate isomerase from Trichormus variabilis (strain ATCC 29413 / PCC 7937) (Anabaena variabilis).